Reading from the N-terminus, the 334-residue chain is Ferredoxin--NADP reductase (334 aa).

Positions 33, 41, 46, 86, 120, 286, and 327 each coordinate FAD.

The protein belongs to the ferredoxin--NADP reductase type 2 family. As to quaternary structure, homodimer. Requires FAD as cofactor.

The catalysed reaction is 2 reduced [2Fe-2S]-[ferredoxin] + NADP(+) + H(+) = 2 oxidized [2Fe-2S]-[ferredoxin] + NADPH. The protein is Ferredoxin--NADP reductase of Rickettsia prowazekii (strain Madrid E).